A 233-amino-acid polypeptide reads, in one-letter code: Protein FAM204A (233 aa).

The disordered stretch occupies residues 1-126 (MWSGLLPPGL…HSEPSSNETQ (126 aa)). The segment covering 13-24 (SDAESNSEDEAT) has biased composition (acidic residues). Basic and acidic residues predominate over residues 39–58 (ESIRKTEIIDFSTDEPKTET). Residues 97 to 109 (FRGKRRKRSRKDK) are compositionally biased toward basic residues. Residues 144-164 (VKRKKVEKSGLEKRIDQAVEE) are a coiled coil.

The polypeptide is Protein FAM204A (FAM204A) (Homo sapiens (Human)).